The sequence spans 341 residues: L-threonine 3-dehydrogenase (341 aa).

Cysteine 38 is a Zn(2+) binding site. Residues threonine 40 and histidine 43 each act as charge relay system in the active site. Residues histidine 63, glutamate 64, cysteine 93, cysteine 96, cysteine 99, and cysteine 107 each coordinate Zn(2+). Residues isoleucine 175, aspartate 195, arginine 200, 262 to 264 (LGI), and 286 to 287 (IY) contribute to the NAD(+) site.

Belongs to the zinc-containing alcohol dehydrogenase family. In terms of assembly, homotetramer. It depends on Zn(2+) as a cofactor.

It localises to the cytoplasm. It catalyses the reaction L-threonine + NAD(+) = (2S)-2-amino-3-oxobutanoate + NADH + H(+). The protein operates within amino-acid degradation; L-threonine degradation via oxydo-reductase pathway; glycine from L-threonine: step 1/2. In terms of biological role, catalyzes the NAD(+)-dependent oxidation of L-threonine to 2-amino-3-ketobutyrate. The polypeptide is L-threonine 3-dehydrogenase (Klebsiella pneumoniae (strain 342)).